The sequence spans 88 residues: Small ribosomal subunit protein bS20 (88 aa).

It belongs to the bacterial ribosomal protein bS20 family.

Its function is as follows. Binds directly to 16S ribosomal RNA. This is Small ribosomal subunit protein bS20 from Desulforamulus reducens (strain ATCC BAA-1160 / DSM 100696 / MI-1) (Desulfotomaculum reducens).